The following is a 70-amino-acid chain: ATP synthase subunit c (70 aa).

2 helical membrane-spanning segments follow: residues 4–24 (IAAG…NGML) and 48–68 (ISMA…FVLI).

This sequence belongs to the ATPase C chain family. F-type ATPases have 2 components, F(1) - the catalytic core - and F(0) - the membrane proton channel. F(1) has five subunits: alpha(3), beta(3), gamma(1), delta(1), epsilon(1). F(0) has three main subunits: a(1), b(2) and c(10-14). The alpha and beta chains form an alternating ring which encloses part of the gamma chain. F(1) is attached to F(0) by a central stalk formed by the gamma and epsilon chains, while a peripheral stalk is formed by the delta and b chains.

It localises to the cell membrane. Its function is as follows. F(1)F(0) ATP synthase produces ATP from ADP in the presence of a proton or sodium gradient. F-type ATPases consist of two structural domains, F(1) containing the extramembraneous catalytic core and F(0) containing the membrane proton channel, linked together by a central stalk and a peripheral stalk. During catalysis, ATP synthesis in the catalytic domain of F(1) is coupled via a rotary mechanism of the central stalk subunits to proton translocation. Key component of the F(0) channel; it plays a direct role in translocation across the membrane. A homomeric c-ring of between 10-14 subunits forms the central stalk rotor element with the F(1) delta and epsilon subunits. The polypeptide is ATP synthase subunit c (Oenococcus oeni (strain ATCC BAA-331 / PSU-1)).